Here is a 126-residue protein sequence, read N- to C-terminus: Aspartate 1-decarboxylase (126 aa).

The active-site Schiff-base intermediate with substrate; via pyruvic acid is serine 25. Serine 25 is modified (pyruvic acid (Ser)). Substrate is bound at residue threonine 57. The active-site Proton donor is the tyrosine 58. 72 to 74 (GAA) is a binding site for substrate.

The protein belongs to the PanD family. Heterooctamer of four alpha and four beta subunits. Pyruvate is required as a cofactor. Post-translationally, is synthesized initially as an inactive proenzyme, which is activated by self-cleavage at a specific serine bond to produce a beta-subunit with a hydroxyl group at its C-terminus and an alpha-subunit with a pyruvoyl group at its N-terminus.

The protein localises to the cytoplasm. It carries out the reaction L-aspartate + H(+) = beta-alanine + CO2. It functions in the pathway cofactor biosynthesis; (R)-pantothenate biosynthesis; beta-alanine from L-aspartate: step 1/1. Catalyzes the pyruvoyl-dependent decarboxylation of aspartate to produce beta-alanine. This Campylobacter jejuni subsp. jejuni serotype O:23/36 (strain 81-176) protein is Aspartate 1-decarboxylase.